Here is a 242-residue protein sequence, read N- to C-terminus: MSGSKREAALTGQPKDERKKSGGGVINRLKARRVQGKESGTSDQSSVTPFREEELLGLNQLRPEHVLGLSRVTENYLCKPEDNIYGIDFTRFKIRDLETGTVLFEISKPCSEQEEEEEESTHLDASAGRFVRYQFTPAFLRLRKVGATVEFTVGDKPVKSFRMIERHYFRDHILKSFDFDFGFCIPNSRNTCEHMYEFPQLSEELIRQMTENPYETRSDSFYFVDNKLIMHNKADYAYNGGH.

A compositionally biased stretch (basic and acidic residues) spans 1 to 20 (MSGSKREAALTGQPKDERKK). The segment at 1 to 49 (MSGSKREAALTGQPKDERKKSGGGVINRLKARRVQGKESGTSDQSSVTP) is disordered. Over residues 38–48 (ESGTSDQSSVT) the composition is skewed to polar residues. Tyr133 contacts tetradecanoate.

The protein belongs to the PDE6D/unc-119 family.

In terms of biological role, myristoyl-binding protein that acts as a cargo adapter: specifically binds the myristoyl moiety of a subset of N-terminally myristoylated proteins and is required for their localization. Plays a key role in localization of proteins to the primary cilium membrane. The sequence is that of Protein unc-119 homolog B-A (unc119b-a) from Xenopus laevis (African clawed frog).